Reading from the N-terminus, the 448-residue chain is Phosphoglucosamine mutase (448 aa).

The active-site Phosphoserine intermediate is S101. Residues S101, D241, D243, and D245 each contribute to the Mg(2+) site. S101 is subject to Phosphoserine.

It belongs to the phosphohexose mutase family. Requires Mg(2+) as cofactor. In terms of processing, activated by phosphorylation.

It catalyses the reaction alpha-D-glucosamine 1-phosphate = D-glucosamine 6-phosphate. Its function is as follows. Catalyzes the conversion of glucosamine-6-phosphate to glucosamine-1-phosphate. The chain is Phosphoglucosamine mutase from Macrococcus caseolyticus (strain JCSC5402) (Macrococcoides caseolyticum).